The primary structure comprises 369 residues: Flagellar P-ring protein (369 aa).

An N-terminal signal peptide occupies residues 1–23 (MRSLLRWMGVLLLCGLCAAPAQA).

It belongs to the FlgI family. The basal body constitutes a major portion of the flagellar organelle and consists of four rings (L,P,S, and M) mounted on a central rod.

The protein localises to the periplasm. It is found in the bacterial flagellum basal body. In terms of biological role, assembles around the rod to form the L-ring and probably protects the motor/basal body from shearing forces during rotation. In Chromohalobacter salexigens (strain ATCC BAA-138 / DSM 3043 / CIP 106854 / NCIMB 13768 / 1H11), this protein is Flagellar P-ring protein.